The chain runs to 1755 residues: MESQQLSNYPHISHGSACASVTSKEVHTNQDPLDVSASKIQEYDKASTKANSQQTTTPASSAVPENPHHASPQPASVPPPQNGPYPQQCMMTQNQANPSGWSFYGHPSMIPYTPYQMSPMYFPPGPQSQFPQYPSSVGTPLSTPSPESGNTFTDSSSADSDMTSTKKYVRPPPMLTSPNDFPNWVKTYIKFLQNSNLGGIIPTVNGKPVRQITDDELTFLYNTFQIFAPSQFLPTWVKDILSVDYTDIMKILSKSIEKMQSDTQEANDIVTLANLQYNGSTPADAFETKVTNIIDRLNNNGIHINNKVACQLIMRGLSGEYKFLRYTRHRHLNMTVAELFLDIHAIYEEQQGSRNSKPNYRRNPSDEKNDSRSYTNTTKPKVIARNPQKTNNSKSKTARAHNVSTSNNSPSTDNDSISKSTTEPIQLNNKHDLHLGQKLTESTVNHTNHSDDELPGHLLLDSGASRTLIRSAHHIHSASSNPDINVVDAQKRNIPINAIGDLQFHFQDNTKTSIKVLHTPNIAYDLLSLNELAAVDITACFTKNVLERSDGTVLAPIVKYGDFYWVSKKYLLPSNISVPTINNVHTSESTRKYPYPFIHRMLAHANAQTIRYSLKNNTITYFNESDVDWSSAIDYQCPDCLIGKSTKHRHIKGSRLKYQNSYEPFQYLHTDIFGPVHNLPKSAPSYFISFTDETTKFRWVYPLHDRREDSILDVFTTILAFIKNQFQASVLVIQMDRGSEYTNRTLHKFLEKNGITPCYTTTADSRAHGVAERLNRTLLDDCRTQLQCSGLPNHLWFSAIEFSTIVRNSLASPKSKKSARQHAGLAGLDISTLLPFGQPVIVNDHNPNSKIHPRGIPGYALHPSRNSYGYIIYLPSLKKTVDTTNYVILQGKESRLDQFNYDALTFDEDLNRLTASYHSFIASNEIQESNDLNIESDHDFQSDIELHPEQPRNVLSKAVSPTDSTPPSTHTEDSKRVSKTNIRAPREVDPNISESNILPSKKRSSTPQISNIESTGSGGMHKLNVPLLAPMSQSNTHESSYASKSKDFRHSDSYSDNETNHTNVPISSTGGTNNKTVPQTSEQETEKRIIHRSPSIDTSSSESNSLHHVVPIKTSDTCPKENTEESIIADLPLPDLPPEPPTELSDSFKELPPINSRQTNSSLGGIGDSNAYTTINSKKRSLEDNETEIKVSRDTWNTKNMRSLEPPRSKKRIHLIAAVKAVKSIKPIRTTLRYDEAITYNKDIKEKEKYIEAYHKEVNQLLKMNTWDTDKYYDRKEIDPKRVINSMFIFNRKRDGTHKARFVARGDIQHPDTYDSGMQSNTVHHYALMTSLSLALDNNYYITQLDISSAYLYADIKEELYIRPPPHLGMNDKLIRLKKSLYGLKQSGANWYETIKSYLIKQCGMEEVRGWSCVFKNSQVTICLFVDDMILFSKDLNSNKRIIAKLKMQYDTKIINLGESDDEIQYDILGLEIKYQRGKYMKLGMENSLTEKIPKLNVPLNPNGRKLGAPGQPGLYINQQELELEEDDYKMKVHEMQKLIGLASYVGYKFRFDLLYYINTLAQHILFPSKQVLDMTYELIQFIWNTRDKQLIWHKSKPVKPTNKLVVISDASYGNQPYYKSQIGNIYLLNGKVIGGKSTKASLTCTSTTEAEIHAISESVPLLNNLSYLIQELDKKPITKGLLTDSKSTISIIISNNEEKFRNRFFGTKAMRLRDEVSGNHLHVCYIETKKNIADVMTKPLPIKTFKLLTNKWIH.

Polar residues-rich tracts occupy residues 1–10 (MESQQLSNYP), 48–60 (TKAN…TPAS), and 127–152 (QSQF…GNTF). Disordered stretches follow at residues 1–93 (MESQ…MMTQ), 126–173 (PQSQ…RPPP), and 352–421 (GSRN…SKST). Positions 153–165 (TDSSSADSDMTST) are enriched in low complexity. The interval 299–401 (NNGIHINNKV…NSKSKTARAH (103 aa)) is RNA-binding. The segment covering 402–418 (NVSTSNNSPSTDNDSIS) has biased composition (low complexity). Phosphoserine is present on Ser-416. Asp-461 (for protease activity; shared with dimeric partner) is an active-site residue. Positions 583 to 640 (NVHTSESTRKYPYPFIHRMLAHANAQTIRYSLKNNTITYFNESDVDWSSAIDYQCPDC) are integrase-type zinc finger-like. The Integrase catalytic domain occupies 660 to 835 (NSYEPFQYLH…AGLDISTLLP (176 aa)). Mg(2+)-binding residues include Asp-671 and Asp-736. A disordered region spans residues 956–1172 (SKAVSPTDST…LGGIGDSNAY (217 aa)). A compositionally biased stretch (low complexity) spans 960 to 969 (SPTDSTPPST). 2 stretches are compositionally biased toward polar residues: residues 1005-1015 (STPQISNIEST) and 1031-1043 (MSQS…SYAS). Residues 1044–1053 (KSKDFRHSDS) are compositionally biased toward basic and acidic residues. Composition is skewed to polar residues over residues 1054–1082 (YSDN…QTSE) and 1095–1106 (SIDTSSSESNSL). The Bipartite nuclear localization signal signature appears at 1178 to 1212 (KKRSLEDNETEIKVSRDTWNTKNMRSLEPPRSKKR). The Reverse transcriptase Ty1/copia-type domain maps to 1338–1476 (NNYYITQLDI…DILGLEIKYQ (139 aa)). Residues Asp-1346, Asp-1427, Asp-1428, Asp-1610, Glu-1652, and Asp-1685 each contribute to the Mg(2+) site. The RNase H Ty1/copia-type domain occupies 1610–1752 (DASYGNQPYY…IKTFKLLTNK (143 aa)).

In terms of assembly, the capsid protein forms a homotrimer, from which the VLPs are assembled. The protease is a homodimer, whose active site consists of two apposed aspartic acid residues. In terms of processing, initially, virus-like particles (VLPs) are composed of the structural unprocessed proteins Gag and Gag-Pol, and also contain the host initiator methionine tRNA (tRNA(i)-Met) which serves as a primer for minus-strand DNA synthesis, and a dimer of genomic Ty RNA. Processing of the polyproteins occurs within the particle and proceeds by an ordered pathway, called maturation. First, the protease (PR) is released by autocatalytic cleavage of the Gag-Pol polyprotein yielding capsid protein p45 and a Pol-p154 precursor protein. This cleavage is a prerequisite for subsequent processing of Pol-p154 at the remaining sites to release the mature structural and catalytic proteins. Maturation takes place prior to the RT reaction and is required to produce transposition-competent VLPs.

It localises to the cytoplasm. It is found in the nucleus. The catalysed reaction is DNA(n) + a 2'-deoxyribonucleoside 5'-triphosphate = DNA(n+1) + diphosphate. The enzyme catalyses Endonucleolytic cleavage to 5'-phosphomonoester.. Its function is as follows. Capsid protein (CA) is the structural component of the virus-like particle (VLP), forming the shell that encapsulates the retrotransposons dimeric RNA genome. The particles are assembled from trimer-clustered units and there are holes in the capsid shells that allow for the diffusion of macromolecules. CA also has nucleocapsid-like chaperone activity, promoting primer tRNA(i)-Met annealing to the multipartite primer-binding site (PBS), dimerization of Ty1 RNA and initiation of reverse transcription. In terms of biological role, the aspartyl protease (PR) mediates the proteolytic cleavages of the Gag and Gag-Pol polyproteins after assembly of the VLP. Functionally, reverse transcriptase/ribonuclease H (RT) is a multifunctional enzyme that catalyzes the conversion of the retro-elements RNA genome into dsDNA within the VLP. The enzyme displays a DNA polymerase activity that can copy either DNA or RNA templates, and a ribonuclease H (RNase H) activity that cleaves the RNA strand of RNA-DNA heteroduplexes during plus-strand synthesis and hydrolyzes RNA primers. The conversion leads to a linear dsDNA copy of the retrotransposon that includes long terminal repeats (LTRs) at both ends. Integrase (IN) targets the VLP to the nucleus, where a subparticle preintegration complex (PIC) containing at least integrase and the newly synthesized dsDNA copy of the retrotransposon must transit the nuclear membrane. Once in the nucleus, integrase performs the integration of the dsDNA into the host genome. The chain is Transposon Ty1-GR3 Gag-Pol polyprotein (TY1B-GR3) from Saccharomyces cerevisiae (strain ATCC 204508 / S288c) (Baker's yeast).